Here is a 175-residue protein sequence, read N- to C-terminus: RNA pyrophosphohydrolase (175 aa).

Residues 6-149 enclose the Nudix hydrolase domain; it reads GYRPNVGIVI…KRDVYRRVMK (144 aa). The Nudix box signature appears at 38 to 59; sequence GGINPGETPEQAMYRELFEEVG.

It belongs to the Nudix hydrolase family. RppH subfamily. It depends on a divalent metal cation as a cofactor.

Accelerates the degradation of transcripts by removing pyrophosphate from the 5'-end of triphosphorylated RNA, leading to a more labile monophosphorylated state that can stimulate subsequent ribonuclease cleavage. The polypeptide is RNA pyrophosphohydrolase (Yersinia pseudotuberculosis serotype O:1b (strain IP 31758)).